The primary structure comprises 324 residues: Acetyl-coenzyme A carboxylase carboxyl transferase subunit alpha (324 aa).

The region spanning I44–F298 is the CoA carboxyltransferase C-terminal domain.

This sequence belongs to the AccA family. In terms of assembly, acetyl-CoA carboxylase is a heterohexamer composed of biotin carboxyl carrier protein (accB), biotin carboxylase (accC) and two subunits each of ACCase subunit alpha (accA) and ACCase subunit beta (accD).

The protein localises to the plastid. It is found in the chloroplast. The enzyme catalyses N(6)-carboxybiotinyl-L-lysyl-[protein] + acetyl-CoA = N(6)-biotinyl-L-lysyl-[protein] + malonyl-CoA. It functions in the pathway lipid metabolism; malonyl-CoA biosynthesis; malonyl-CoA from acetyl-CoA: step 1/1. Component of the acetyl coenzyme A carboxylase (ACC) complex. First, biotin carboxylase catalyzes the carboxylation of biotin on its carrier protein (BCCP) and then the CO(2) group is transferred by the carboxyltransferase to acetyl-CoA to form malonyl-CoA. This is Acetyl-coenzyme A carboxylase carboxyl transferase subunit alpha from Cyanidium caldarium (Red alga).